Consider the following 211-residue polypeptide: UPF0319 protein VC_A0026 (211 aa).

A signal peptide spans 1–21 (MKPMQRLTCLLALCFAASASA).

This sequence belongs to the UPF0319 family.

This chain is UPF0319 protein VC_A0026, found in Vibrio cholerae serotype O1 (strain ATCC 39315 / El Tor Inaba N16961).